Here is a 393-residue protein sequence, read N- to C-terminus: Actin-related protein 2 (393 aa).

Residues 158–160 (GDG), 212–216 (RQMKE), and 303–308 (GGTTMY) contribute to the ATP site.

Belongs to the actin family. ARP2 subfamily. In terms of assembly, component of the Arp2/3 complex.

It is found in the cytoplasm. Its subcellular location is the cytoskeleton. Functionally, functions as ATP-binding component of the Arp2/3 complex which is involved in regulation of actin polymerization and together with an activating nucleation-promoting factor (NPF) mediates the formation of branched actin networks. Seems to contact the pointed end of the daughter actin filament. The protein is Actin-related protein 2 (arx-2) of Caenorhabditis briggsae.